The chain runs to 641 residues: Phosphomethylpyrimidine synthase (641 aa).

Substrate-binding positions include Asn221, Met250, Tyr279, His315, 335–337, 376–379, and Glu415; these read SRG and DGLR. His419 is a binding site for Zn(2+). Residue Tyr442 coordinates substrate. His483 provides a ligand contact to Zn(2+). [4Fe-4S] cluster-binding residues include Cys563, Cys566, and Cys571.

This sequence belongs to the ThiC family. In terms of assembly, homodimer. The cofactor is [4Fe-4S] cluster.

The enzyme catalyses 5-amino-1-(5-phospho-beta-D-ribosyl)imidazole + S-adenosyl-L-methionine = 4-amino-2-methyl-5-(phosphooxymethyl)pyrimidine + CO + 5'-deoxyadenosine + formate + L-methionine + 3 H(+). The protein operates within cofactor biosynthesis; thiamine diphosphate biosynthesis. Catalyzes the synthesis of the hydroxymethylpyrimidine phosphate (HMP-P) moiety of thiamine from aminoimidazole ribotide (AIR) in a radical S-adenosyl-L-methionine (SAM)-dependent reaction. This chain is Phosphomethylpyrimidine synthase, found in Rhodopseudomonas palustris (strain BisA53).